Here is a 256-residue protein sequence, read N- to C-terminus: tRNA (guanine-N(7)-)-methyltransferase (256 aa).

The S-adenosyl-L-methionine site is built by E85, E110, D137, and D159. The active site involves D159. 2 residues coordinate substrate: K163 and D195.

It belongs to the class I-like SAM-binding methyltransferase superfamily. TrmB family.

The enzyme catalyses guanosine(46) in tRNA + S-adenosyl-L-methionine = N(7)-methylguanosine(46) in tRNA + S-adenosyl-L-homocysteine. It participates in tRNA modification; N(7)-methylguanine-tRNA biosynthesis. Its function is as follows. Catalyzes the formation of N(7)-methylguanine at position 46 (m7G46) in tRNA. The chain is tRNA (guanine-N(7)-)-methyltransferase from Rhodopseudomonas palustris (strain HaA2).